Here is a 250-residue protein sequence, read N- to C-terminus: 5'-nucleotidase SurE (250 aa).

A divalent metal cation is bound by residues D9, D10, S40, and N92.

Belongs to the SurE nucleotidase family. A divalent metal cation serves as cofactor.

It localises to the cytoplasm. The catalysed reaction is a ribonucleoside 5'-phosphate + H2O = a ribonucleoside + phosphate. Its function is as follows. Nucleotidase that shows phosphatase activity on nucleoside 5'-monophosphates. This chain is 5'-nucleotidase SurE, found in Shewanella pealeana (strain ATCC 700345 / ANG-SQ1).